Consider the following 92-residue polypeptide: Small ribosomal subunit protein bS20 (92 aa).

Basic residues predominate over residues 1–11 (MANIKSQKKRI). Residues 1–22 (MANIKSQKKRIRQNEKARLRNK) form a disordered region.

The protein belongs to the bacterial ribosomal protein bS20 family.

Functionally, binds directly to 16S ribosomal RNA. The chain is Small ribosomal subunit protein bS20 from Thermobifida fusca (strain YX).